An 810-amino-acid polypeptide reads, in one-letter code: Probable dehydratase YbiW (810 aa).

The region spanning 11 to 682 (DRIKAHKNAL…QTMATPDGRK (672 aa)) is the PFL domain. The interval 677–699 (TPDGRKAHTPLAEGASPASGTDH) is disordered. Residues 689-810 (EGASPASGTD…DIIARTEHML (122 aa)) form the Glycine radical domain. G786 is modified (glycine radical).

It belongs to the glycyl radical enzyme (GRE) family.

Functionally, probably shows dehydratase activity. The sequence is that of Probable dehydratase YbiW (ybiW) from Escherichia coli (strain K12).